Here is a 431-residue protein sequence, read N- to C-terminus: Adenylosuccinate synthetase (431 aa).

GTP-binding positions include 13-19 and 41-43; these read GDEGKGK and GHT. Residue D14 is the Proton acceptor of the active site. D14 and G41 together coordinate Mg(2+). IMP contacts are provided by residues 14–17, 39–42, T130, R144, Q225, T240, and R304; these read DEGK and NAGH. H42 serves as the catalytic Proton donor. 300-306 is a substrate binding site; the sequence is ATTGRKR. GTP is bound by residues R306, 332–334, and 415–417; these read KLD and STG.

The protein belongs to the adenylosuccinate synthetase family. In terms of assembly, homodimer. The cofactor is Mg(2+).

It is found in the cytoplasm. The catalysed reaction is IMP + L-aspartate + GTP = N(6)-(1,2-dicarboxyethyl)-AMP + GDP + phosphate + 2 H(+). Its pathway is purine metabolism; AMP biosynthesis via de novo pathway; AMP from IMP: step 1/2. Functionally, plays an important role in the de novo pathway of purine nucleotide biosynthesis. Catalyzes the first committed step in the biosynthesis of AMP from IMP. The chain is Adenylosuccinate synthetase from Shewanella halifaxensis (strain HAW-EB4).